Consider the following 181-residue polypeptide: ADP-ribosylation factor 1 (181 aa).

Gly2 carries the N-myristoyl glycine lipid modification. Positions 3-16 (NMFANLFKGLFGKK) are important for the stable binding to the membranes. GTP contacts are provided by residues 24-32 (GLDAAGKTT), 126-129 (NKQD), and Ala160.

This sequence belongs to the small GTPase superfamily. Arf family.

It is found in the golgi apparatus membrane. The catalysed reaction is GTP + H2O = GDP + phosphate + H(+). With respect to regulation, alternates between an inactive GDP-bound form and an active GTP-bound form. Activated by a guanine nucleotide-exchange factor (GEF) and inactivated by GTPase-activating protein (GAP). Small GTPase involved in protein trafficking between different compartments. Modulates vesicle budding and uncoating within the Golgi complex. In its GTP-bound form, triggers the recruitment of coatomer proteins to the Golgi membrane. The hydrolysis of ARF1-bound GTP, which is mediated by ARFGAPs proteins, is required for dissociation of coat proteins from Golgi membranes and vesicles. The polypeptide is ADP-ribosylation factor 1 (arf1) (Xenopus laevis (African clawed frog)).